The following is a 307-amino-acid chain: MAIPVIDFSKLNGEEREKTLSEIARACEEWGFFQLVNHGIPLELLNKVKKLSSDCYKTEREEAFKTSNPVKLLNELVQKNSGEKLENVDWEDVFTLLDHNQNEWPSNIKETMGEYREEVRKLASKMMEVMDENLGLPKGYIKKAFNEGMEDGEETAFFGTKVSHYPPCPHPELVNGLRAHTDAGGVVLLFQDDEYDGLQVLKDGEWIDVQPLPNAIVINTGDQIEVLSNGRYKSAWHRVLAREEGNRRSIASFYNPSYKAAIGPAAVAEEEGSEKKYPKFVFGDYMDVYANQKFMPKEPRFLAVKSL.

Residues 106–134 (SNIKETMGEYREEVRKLASKMMEVMDENL) are a coiled coil. Residues 152 to 256 (GEETAFFGTK…RRSIASFYNP (105 aa)) enclose the Fe2OG dioxygenase domain. Residues histidine 180, aspartate 182, and histidine 237 each coordinate Fe cation. Arginine 247 provides a ligand contact to 2-oxoglutarate.

The protein belongs to the iron/ascorbate-dependent oxidoreductase family. The cofactor is Fe(2+).

It catalyses the reaction 1-aminocyclopropane-1-carboxylate + L-ascorbate + O2 = ethene + L-dehydroascorbate + hydrogen cyanide + CO2 + 2 H2O. Its pathway is alkene biosynthesis; ethylene biosynthesis via S-adenosyl-L-methionine; ethylene from S-adenosyl-L-methionine: step 2/2. Enzyme involved in the ethylene biosynthesis. In Arabidopsis thaliana (Mouse-ear cress), this protein is 1-aminocyclopropane-1-carboxylate oxidase 5.